Consider the following 303-residue polypeptide: Recombination-associated protein RdgC (303 aa).

The protein belongs to the RdgC family.

The protein localises to the cytoplasm. It is found in the nucleoid. In terms of biological role, may be involved in recombination. The polypeptide is Recombination-associated protein RdgC (Pseudoalteromonas translucida (strain TAC 125)).